Here is a 173-residue protein sequence, read N- to C-terminus: DRBM domain-containing protein 340R (173 aa).

One can recognise a DRBM domain in the interval 30–102; it reads NSIGFLNEFC…AFKTIKELNL (73 aa).

The protein is DRBM domain-containing protein 340R of Invertebrate iridescent virus 6 (IIV-6).